A 264-amino-acid polypeptide reads, in one-letter code: General transcription factor IIF subunit 2 (264 aa).

The protein belongs to the TFIIF beta subunit family. As to quaternary structure, heterodimer of an alpha and a beta subunit.

It is found in the nucleus. Its function is as follows. TFIIF is a general transcription initiation factor that binds to RNA polymerase II and helps to recruit it to the initiation complex in collaboration with TFIIB. In Xenopus laevis (African clawed frog), this protein is General transcription factor IIF subunit 2 (gtf2f2).